We begin with the raw amino-acid sequence, 1126 residues long: Translation initiation factor IF-2 (1126 aa).

The disordered stretch occupies residues 63–519; the sequence is LSINKPSIKK…TTRQRQKRRA (457 aa). Over residues 70–83 the composition is skewed to basic and acidic residues; that stretch reads IKKDNFKQNKEDKS. Over residues 93-111 the composition is skewed to low complexity; that stretch reads PLKNNSNKKPLLIKPLNKP. A compositionally biased stretch (polar residues) spans 116 to 151; it reads KISNQLQNPNKPNIVNSSQSRANLTNTNSKPSQNFN. Over residues 161 to 171 the composition is skewed to pro residues; sequence TPPPIKSPAKP. Residues 181-195 are compositionally biased toward polar residues; sequence NINNNVKSSESSQNI. Composition is skewed to low complexity over residues 211 to 224 and 240 to 252; these read NTNK…NNRK and IINP…NKQN. Residues 254–264 show a composition bias toward polar residues; the sequence is AFKQTASNRPG. 2 stretches are compositionally biased toward low complexity: residues 291–315 and 327–349; these read NRQG…GLRN and NRQG…NRPG. Basic and acidic residues predominate over residues 429–443; that stretch reads GKTDWDDSAKLEALR. Residues 501 to 517 are compositionally biased toward basic residues; the sequence is KQFKKKKKETTRQRQKR. In terms of domain architecture, tr-type G spans 618-790; sequence RRPPVITVMG…ILLVSDVEDL (173 aa). The tract at residues 627–634 is G1; the sequence is GHVDHGKT. Residue 627 to 634 participates in GTP binding; the sequence is GHVDHGKT. Residues 652-656 are G2; that stretch reads GITQH. Positions 677–680 are G3; that stretch reads DTPG. GTP-binding positions include 677–681 and 731–734; these read DTPGH and NKID. The interval 731-734 is G4; the sequence is NKID. The interval 767–769 is G5; it reads SAI.

This sequence belongs to the TRAFAC class translation factor GTPase superfamily. Classic translation factor GTPase family. IF-2 subfamily.

It is found in the cytoplasm. Functionally, one of the essential components for the initiation of protein synthesis. Protects formylmethionyl-tRNA from spontaneous hydrolysis and promotes its binding to the 30S ribosomal subunits. Also involved in the hydrolysis of GTP during the formation of the 70S ribosomal complex. The protein is Translation initiation factor IF-2 of Prochlorococcus marinus (strain AS9601).